A 238-amino-acid polypeptide reads, in one-letter code: Probable transcriptional regulatory protein SAB0618 (238 aa).

It belongs to the TACO1 family. YeeN subfamily.

It localises to the cytoplasm. The sequence is that of Probable transcriptional regulatory protein SAB0618 from Staphylococcus aureus (strain bovine RF122 / ET3-1).